Here is a 759-residue protein sequence, read N- to C-terminus: LPS-assembly protein LptD (759 aa).

Positions 1 to 45 are cleaved as a signal peptide; sequence MKPLKLELNPRDFNHYQAAFLPYRMKIKQPLHVLCFSVCSLSAVA.

This sequence belongs to the LptD family. As to quaternary structure, component of the lipopolysaccharide transport and assembly complex. Interacts with LptE and LptA.

The protein resides in the cell outer membrane. Its function is as follows. Together with LptE, is involved in the assembly of lipopolysaccharide (LPS) at the surface of the outer membrane. In Pseudoalteromonas atlantica (strain T6c / ATCC BAA-1087), this protein is LPS-assembly protein LptD.